We begin with the raw amino-acid sequence, 384 residues long: Large ribosomal subunit protein uL3m (384 aa).

2 disordered regions span residues 80-101 and 237-262; these read NQVT…KRRE and QEAS…SGSR. The span at 240–249 shows a compositional bias: polar residues; sequence SHGNSLNHRT.

The protein belongs to the universal ribosomal protein uL3 family. In terms of assembly, component of the mitochondrial large ribosomal subunit (mt-LSU). Mature N.crassa 74S mitochondrial ribosomes consist of a small (37S) and a large (54S) subunit. The 37S small subunit contains a 16S ribosomal RNA (16S mt-rRNA) and 32 different proteins. The 54S large subunit contains a 23S rRNA (23S mt-rRNA) and 42 different proteins.

The protein localises to the mitochondrion. Its function is as follows. Component of the mitochondrial ribosome (mitoribosome), a dedicated translation machinery responsible for the synthesis of mitochondrial genome-encoded proteins, including at least some of the essential transmembrane subunits of the mitochondrial respiratory chain. The mitoribosomes are attached to the mitochondrial inner membrane and translation products are cotranslationally integrated into the membrane. The chain is Large ribosomal subunit protein uL3m (mrpl9) from Neurospora crassa (strain ATCC 24698 / 74-OR23-1A / CBS 708.71 / DSM 1257 / FGSC 987).